Consider the following 275-residue polypeptide: MEQNGSTVVRAYAKINLSLDVVKKRDDGYHEINSLFQNISLYDRLSIVKIDRGLEIKSNVEIENNILYKVWDLFCEKYKEPEFGFRVILEKNIPMEAGLGGGSADAAALLFFLGKTFKIPTSELLNLAIKIGSDVPFFLIGGTAVVKGKGEKIEPLPALKGYYVDLLTSENGISTKEAYSLLNPSLFNRAPCSPYVLYEAYKNRNAGEIKRCTYNIFEKVVANNYKEIMANIKRLRRTHITAALTGSGSAVFGVSFRDGKYKFVSRGVEYEETKL.

Residue K14 is part of the active site. 94-104 (PMEAGLGGGSA) is an ATP binding site. D134 is a catalytic residue.

This sequence belongs to the GHMP kinase family. IspE subfamily.

The catalysed reaction is 4-CDP-2-C-methyl-D-erythritol + ATP = 4-CDP-2-C-methyl-D-erythritol 2-phosphate + ADP + H(+). It functions in the pathway isoprenoid biosynthesis; isopentenyl diphosphate biosynthesis via DXP pathway; isopentenyl diphosphate from 1-deoxy-D-xylulose 5-phosphate: step 3/6. Catalyzes the phosphorylation of the position 2 hydroxy group of 4-diphosphocytidyl-2C-methyl-D-erythritol. The polypeptide is 4-diphosphocytidyl-2-C-methyl-D-erythritol kinase (Thermosipho africanus (strain TCF52B)).